Consider the following 489-residue polypeptide: MSALHTLSLAAIRDALARREVRAEDAVLDCLARIETTEPRIDALLHLRAEAAIEEARALDAAGPDASRPLWGVPVTVKDALTTAGTPTTAGSRILEDFVPFYDAFAVQRLREAGAIILGKNNMDEFAMGSSTENSAYKPTRNPWDTARVPGGSSGGSAASVAAGQCFASLGTDTGGSIRQPASLCGCVGLKPTYGRVSRFGLIAYGSSLDQIGPMTRTVEDAAIVMGVIAGHDKRDSTCADRPVEDFAAALASRHDLAGVRIGVPAEFWGEGLSPEVATSCRAALDAARDLGATIVDVALPHTPQSIAAYYIVASAEASSNLARYDGVRYGKRAHAPEDLMDLYVRSRSEGLGDEVQRRIMLGTYVLSSGYYDAYYRKAAQVRRRILEDYRNAFATCDVICGPVSPVTAWPLGALTADPLQMYLMDVFTLSLNLAGLPGLSLPVGLGTESGMPVGIQLLGRSFDEATLLSVGNVLSRALPPLGSPAGLR.

Active-site charge relay system residues include Lys78 and Ser153. The Acyl-ester intermediate role is filled by Ser177.

The protein belongs to the amidase family. GatA subfamily. Heterotrimer of A, B and C subunits.

The enzyme catalyses L-glutamyl-tRNA(Gln) + L-glutamine + ATP + H2O = L-glutaminyl-tRNA(Gln) + L-glutamate + ADP + phosphate + H(+). Its function is as follows. Allows the formation of correctly charged Gln-tRNA(Gln) through the transamidation of misacylated Glu-tRNA(Gln) in organisms which lack glutaminyl-tRNA synthetase. The reaction takes place in the presence of glutamine and ATP through an activated gamma-phospho-Glu-tRNA(Gln). This chain is Glutamyl-tRNA(Gln) amidotransferase subunit A, found in Nitratidesulfovibrio vulgaris (strain DP4) (Desulfovibrio vulgaris).